The primary structure comprises 478 residues: Cysteine--tRNA ligase (478 aa).

Cys-29 contributes to the Zn(2+) binding site. The 'HIGH' region signature appears at 31 to 41 (PTVYDIPHIGN). Zn(2+) contacts are provided by Cys-216, His-241, and Glu-245. The 'KMSKS' region signature appears at 274–278 (KMSKS). Lys-277 serves as a coordination point for ATP.

The protein belongs to the class-I aminoacyl-tRNA synthetase family. As to quaternary structure, monomer. Zn(2+) is required as a cofactor.

The protein resides in the cytoplasm. It catalyses the reaction tRNA(Cys) + L-cysteine + ATP = L-cysteinyl-tRNA(Cys) + AMP + diphosphate. The polypeptide is Cysteine--tRNA ligase (Orientia tsutsugamushi (strain Ikeda) (Rickettsia tsutsugamushi)).